The chain runs to 403 residues: TPR repeat-containing protein Synpcc7942_0270 (403 aa).

5 TPR repeats span residues Ala208–Ala243, Val244–Lys282, Leu283–Ala316, Thr317–Asp350, and Pro351–Pro387.

The polypeptide is TPR repeat-containing protein Synpcc7942_0270 (Synechococcus elongatus (strain ATCC 33912 / PCC 7942 / FACHB-805) (Anacystis nidulans R2)).